Here is a 341-residue protein sequence, read N- to C-terminus: Tetraacyldisaccharide 4'-kinase (341 aa).

54–61 is a binding site for ATP; it reads TVGGAGKT.

Belongs to the LpxK family.

The enzyme catalyses a lipid A disaccharide + ATP = a lipid IVA + ADP + H(+). It participates in glycolipid biosynthesis; lipid IV(A) biosynthesis; lipid IV(A) from (3R)-3-hydroxytetradecanoyl-[acyl-carrier-protein] and UDP-N-acetyl-alpha-D-glucosamine: step 6/6. In terms of biological role, transfers the gamma-phosphate of ATP to the 4'-position of a tetraacyldisaccharide 1-phosphate intermediate (termed DS-1-P) to form tetraacyldisaccharide 1,4'-bis-phosphate (lipid IVA). In Brucella suis (strain ATCC 23445 / NCTC 10510), this protein is Tetraacyldisaccharide 4'-kinase.